The following is a 384-amino-acid chain: Glucans biosynthesis protein C (384 aa).

10 helical membrane-spanning segments follow: residues 17-37 (AWLM…THSW), 54-74 (FIHA…SYML), 91-111 (VGIP…ILLQ), 140-160 (LWFL…FTWF), 173-193 (AISL…YAAI), 212-232 (FIVM…LAFI), 240-260 (FTTP…AYLL), 274-294 (TESV…FSLG), 311-331 (ASLF…AYIT), and 338-358 (LIGF…LYEI).

This sequence belongs to the acyltransferase 3 family. OpgC subfamily.

The protein localises to the cell membrane. It participates in glycan metabolism; osmoregulated periplasmic glucan (OPG) biosynthesis. In terms of biological role, necessary for the succinyl substitution of periplasmic glucans. Could catalyze the transfer of succinyl residues from the cytoplasmic side of the membrane to the nascent glucan backbones on the periplasmic side of the membrane. The protein is Glucans biosynthesis protein C of Salmonella typhi.